The primary structure comprises 409 residues: Small ribosomal subunit protein mS47 (409 aa).

The transit peptide at 1–26 directs the protein to the mitochondrion; that stretch reads MQTVKALRRVSEPLQWVRSVSYGRRF. The segment at 388–409 is disordered; that stretch reads ASELDDSDSELKLPTAQREPYF.

It belongs to the enoyl-CoA hydratase/isomerase family. Mitochondrion-specific ribosomal protein mS47 subfamily. Component of the mitochondrial ribosome small subunit.

It localises to the mitochondrion. The protein is Small ribosomal subunit protein mS47 of Arabidopsis thaliana (Mouse-ear cress).